Consider the following 170-residue polypeptide: Ribosome maturation factor RimM (170 aa).

Residues 92 to 163 form the PRC barrel domain; the sequence is KEGWYYFELE…RMDVELPPGL (72 aa).

The protein belongs to the RimM family. In terms of assembly, binds ribosomal protein uS19.

It is found in the cytoplasm. An accessory protein needed during the final step in the assembly of 30S ribosomal subunit, possibly for assembly of the head region. Essential for efficient processing of 16S rRNA. May be needed both before and after RbfA during the maturation of 16S rRNA. It has affinity for free ribosomal 30S subunits but not for 70S ribosomes. The chain is Ribosome maturation factor RimM from Desulfitobacterium hafniense (strain Y51).